We begin with the raw amino-acid sequence, 393 residues long: Glutamate 5-kinase 1 (393 aa).

K17 contacts ATP. Substrate contacts are provided by S57, D144, and N156. 176–177 (SD) serves as a coordination point for ATP. Residues 282–359 (AGSLSIDAGA…AEIAAILGYA (78 aa)) enclose the PUA domain.

The protein belongs to the glutamate 5-kinase family.

The protein localises to the cytoplasm. It carries out the reaction L-glutamate + ATP = L-glutamyl 5-phosphate + ADP. It participates in amino-acid biosynthesis; L-proline biosynthesis; L-glutamate 5-semialdehyde from L-glutamate: step 1/2. Its function is as follows. Catalyzes the transfer of a phosphate group to glutamate to form L-glutamate 5-phosphate. The protein is Glutamate 5-kinase 1 of Rhizobium meliloti (strain 1021) (Ensifer meliloti).